The sequence spans 120 residues: Aspartate 1-decarboxylase (120 aa).

Ser25 functions as the Schiff-base intermediate with substrate; via pyruvic acid in the catalytic mechanism. Ser25 carries the post-translational modification Pyruvic acid (Ser). Thr57 serves as a coordination point for substrate. Tyr58 functions as the Proton donor in the catalytic mechanism. 73 to 75 (GAA) lines the substrate pocket.

The protein belongs to the PanD family. In terms of assembly, heterooctamer of four alpha and four beta subunits. It depends on pyruvate as a cofactor. Post-translationally, is synthesized initially as an inactive proenzyme, which is activated by self-cleavage at a specific serine bond to produce a beta-subunit with a hydroxyl group at its C-terminus and an alpha-subunit with a pyruvoyl group at its N-terminus.

The protein resides in the cytoplasm. The catalysed reaction is L-aspartate + H(+) = beta-alanine + CO2. Its pathway is cofactor biosynthesis; (R)-pantothenate biosynthesis; beta-alanine from L-aspartate: step 1/1. Its function is as follows. Catalyzes the pyruvoyl-dependent decarboxylation of aspartate to produce beta-alanine. The polypeptide is Aspartate 1-decarboxylase (Thermus thermophilus (strain ATCC 27634 / DSM 579 / HB8)).